We begin with the raw amino-acid sequence, 377 residues long: uncharacterized protein (377 aa).

Disordered regions lie at residues 10 to 79 (YSDG…NVNN), 91 to 141 (KKNN…DKEE), 182 to 257 (EAKK…TTTT), 265 to 284 (ENEN…EPIE), and 289 to 326 (LEFN…KEEP). Low complexity-rich tracts occupy residues 14–24 (IPQPTITPPTQ), 46–79 (NKNN…NVNN), and 93–124 (NNNN…FNDN). Composition is skewed to basic and acidic residues over residues 182–196 (EAKK…KRGE) and 209–218 (QTPDKKKKLE). The segment covering 221–257 (TSKNNNKSSTTKTELTNTTTNTSSTTNPTTDTTTTTT) has biased composition (low complexity). 2 stretches are compositionally biased toward basic and acidic residues: residues 265 to 274 (ENENQEKENN) and 292 to 303 (NKFEEKPIKEVK). The segment covering 311 to 320 (KRNKKRNNPK) has biased composition (basic residues).

This is an uncharacterized protein from Dictyostelium discoideum (Social amoeba).